The chain runs to 882 residues: Protein O-mannosyl-transferase TMTC1 (882 aa).

Residues 1–20 (MVVTTSARGGGGDRTPSRRR) are Cytoplasmic-facing. A disordered region spans residues 1-20 (MVVTTSARGGGGDRTPSRRR). A helical membrane pass occupies residues 21-41 (GCGLAPAGAAALLAGASCLCY). The Extracellular segment spans residues 42-110 (GRSLQGEFVH…KLNIFLTGMN (69 aa)). Asn-86 is a glycosylation site (N-linked (GlcNAc...) asparagine). A helical membrane pass occupies residues 111–131 (PFYFHAVNIILHCLVTLVLMY). Topologically, residues 132-137 (TCDKTV) are cytoplasmic. A helical membrane pass occupies residues 138-157 (FKNRGLAFVTALLFAVHPIH). At 158-160 (TEA) the chain is on the extracellular side. The chain crosses the membrane as a helical span at residues 161–181 (VAGIVGRADVLACLLFLLAFL). Residues 182 to 197 (SYNRSLDQGCVGGSFP) are Cytoplasmic-facing. A helical membrane pass occupies residues 198–218 (STVSPFFLLLSLFLGTCAMLV). Residues 219–221 (KET) are Extracellular-facing. Residues 222-238 (GITVFGVCLVYDLFSLS) traverse the membrane as a helical segment. Residues 239-313 (NKQDKSSNGA…SPRAVWSMMR (75 aa)) are Cytoplasmic-facing. Positions 246–277 (NGALCPRSPQQPGSPQPSSLPGHPHRENGKQQ) are disordered. Residues 251–267 (PRSPQQPGSPQPSSLPG) are compositionally biased toward low complexity. A helical membrane pass occupies residues 314–334 (FLTYSYLLAFNVWLLLAPVTL). At 335–354 (CYDWQVGSIPLVETIWDMRN) the chain is on the extracellular side. A helical transmembrane segment spans residues 355–375 (LATIFLAVVMALLSLHCLAAF). The Cytoplasmic portion of the chain corresponds to 376-381 (KRLEHK). The helical transmembrane segment at 382–402 (EVLVGLLFLVFPFIPASNLFF) threads the bilayer. Residue Arg-403 is a topological domain, extracellular. Residues 404-424 (VGFVVAERVLYMPSMGYCILF) traverse the membrane as a helical segment. Over 425–438 (VHGLSKLCTWLNRC) the chain is Cytoplasmic. A helical transmembrane segment spans residues 439-459 (GATTLIVSTVLLLLLFSWKTV). Topologically, residues 460–882 (KQNEIWLSRE…LQEVREKDQT (423 aa)) are extracellular. 10 TPR repeats span residues 483-516 (AKVH…YPRH), 517-547 (ASAL…HPQH), 548-581 (NRAL…GPEF), 582-615 (ADAY…CPDS), 616-649 (SDLH…SPSH), 650-682 (HVAM…VAHK), 683-716 (AEIL…QPSQ), 751-784 (LECY…KPKD), 789-822 (SELF…NPDQ), and 823-856 (AQAW…VPDS).

Belongs to the TMTC family. In terms of assembly, may interact with FAM168B.

It localises to the membrane. Its subcellular location is the endoplasmic reticulum. It catalyses the reaction a di-trans,poly-cis-dolichyl beta-D-mannosyl phosphate + L-seryl-[protein] = 3-O-(alpha-D-mannosyl)-L-seryl-[protein] + a di-trans,poly-cis-dolichyl phosphate + H(+). It carries out the reaction a di-trans,poly-cis-dolichyl beta-D-mannosyl phosphate + L-threonyl-[protein] = 3-O-(alpha-D-mannosyl)-L-threonyl-[protein] + a di-trans,poly-cis-dolichyl phosphate + H(+). It functions in the pathway protein modification; protein glycosylation. In terms of biological role, transfers mannosyl residues to the hydroxyl group of serine or threonine residues. The 4 members of the TMTC family are O-mannosyl-transferases dedicated primarily to the cadherin superfamily, each member seems to have a distinct role in decorating the cadherin domains with O-linked mannose glycans at specific regions. Also acts as O-mannosyl-transferase on other proteins such as PDIA3. This chain is Protein O-mannosyl-transferase TMTC1, found in Homo sapiens (Human).